The primary structure comprises 120 residues: Large ribosomal subunit protein uL22 (120 aa).

This sequence belongs to the universal ribosomal protein uL22 family. As to quaternary structure, part of the 50S ribosomal subunit.

Functionally, this protein binds specifically to 23S rRNA; its binding is stimulated by other ribosomal proteins, e.g. L4, L17, and L20. It is important during the early stages of 50S assembly. It makes multiple contacts with different domains of the 23S rRNA in the assembled 50S subunit and ribosome. In terms of biological role, the globular domain of the protein is located near the polypeptide exit tunnel on the outside of the subunit, while an extended beta-hairpin is found that lines the wall of the exit tunnel in the center of the 70S ribosome. The polypeptide is Large ribosomal subunit protein uL22 (Borreliella afzelii (strain PKo) (Borrelia afzelii)).